The following is a 311-amino-acid chain: tRNA dimethylallyltransferase (311 aa).

10-17 serves as a coordination point for ATP; it reads GPTAVGKT. A substrate-binding site is contributed by 12–17; the sequence is TAVGKT. The tract at residues 35 to 38 is interaction with substrate tRNA; sequence DSMQ.

Belongs to the IPP transferase family. In terms of assembly, monomer. It depends on Mg(2+) as a cofactor.

The catalysed reaction is adenosine(37) in tRNA + dimethylallyl diphosphate = N(6)-dimethylallyladenosine(37) in tRNA + diphosphate. Catalyzes the transfer of a dimethylallyl group onto the adenine at position 37 in tRNAs that read codons beginning with uridine, leading to the formation of N6-(dimethylallyl)adenosine (i(6)A). This Anoxybacillus flavithermus (strain DSM 21510 / WK1) protein is tRNA dimethylallyltransferase.